A 344-amino-acid polypeptide reads, in one-letter code: L-sulfolactate dehydrogenase (344 aa).

The protein belongs to the LDH2/MDH2 oxidoreductase family.

The protein resides in the cytoplasm. The enzyme catalyses a (2S)-2-hydroxycarboxylate + NAD(+) = a 2-oxocarboxylate + NADH + H(+). The protein operates within cofactor biosynthesis; coenzyme M biosynthesis; sulfoacetaldehyde from phosphoenolpyruvate and sulfite: step 3/4. It participates in cofactor biosynthesis; 5,6,7,8-tetrahydromethanopterin biosynthesis. Its function is as follows. Catalyzes the reduction of sulfopyruvate to (R)-sulfolactate much more efficiently than the reverse reaction. Also catalyzes the reduction of oxaloacetate, alpha-ketoglutarate, and to a much lower extent, KHTCA, but not pyruvate. Involved in the biosynthesis of both coenzyme M (with (R)-sulfolactate) and methanopterin (with alpha-ketoglutarate). In Methanocaldococcus jannaschii (strain ATCC 43067 / DSM 2661 / JAL-1 / JCM 10045 / NBRC 100440) (Methanococcus jannaschii), this protein is L-sulfolactate dehydrogenase (comC).